The following is a 263-amino-acid chain: Granzyme K (263 aa).

A signal peptide spans 1-21 (MRFSSWALVSLVAGVYMSSEC). Positions 22 to 25 (FHTE) are cleaved as a propeptide — activation peptide. The Peptidase S1 domain maps to 26–258 (IIGGREVQPH…YQTWIKSKLA (233 aa)). A disulfide bond links C51 and C67. Residues H66 and D115 each act as charge relay system in the active site. 3 disulfides stabilise this stretch: C148/C219, C180/C198, and C209/C233. S213 serves as the catalytic Charge relay system.

It belongs to the peptidase S1 family. Granzyme subfamily.

Its subcellular location is the cytoplasmic granule. The chain is Granzyme K (Gzmk) from Mus musculus (Mouse).